The primary structure comprises 350 residues: Biotin synthase (350 aa).

The Radical SAM core domain occupies 54 to 278 (REIQLSTLLS…TMPQSYVRLS (225 aa)). [4Fe-4S] cluster is bound by residues C69, C73, and C76. Residues C113, C144, C204, and R276 each contribute to the [2Fe-2S] cluster site.

It belongs to the radical SAM superfamily. Biotin synthase family. In terms of assembly, homodimer. Requires [4Fe-4S] cluster as cofactor. It depends on [2Fe-2S] cluster as a cofactor.

It catalyses the reaction (4R,5S)-dethiobiotin + (sulfur carrier)-SH + 2 reduced [2Fe-2S]-[ferredoxin] + 2 S-adenosyl-L-methionine = (sulfur carrier)-H + biotin + 2 5'-deoxyadenosine + 2 L-methionine + 2 oxidized [2Fe-2S]-[ferredoxin]. Its pathway is cofactor biosynthesis; biotin biosynthesis; biotin from 7,8-diaminononanoate: step 2/2. In terms of biological role, catalyzes the conversion of dethiobiotin (DTB) to biotin by the insertion of a sulfur atom into dethiobiotin via a radical-based mechanism. This is Biotin synthase from Neisseria meningitidis serogroup C / serotype 2a (strain ATCC 700532 / DSM 15464 / FAM18).